The sequence spans 130 residues: Small ribosomal subunit protein uS8 (130 aa).

It belongs to the universal ribosomal protein uS8 family. Part of the 30S ribosomal subunit.

Functionally, one of the primary rRNA binding proteins, it binds directly to 16S rRNA central domain where it helps coordinate assembly of the platform of the 30S subunit. The protein is Small ribosomal subunit protein uS8 of Methanothermobacter thermautotrophicus (strain ATCC 29096 / DSM 1053 / JCM 10044 / NBRC 100330 / Delta H) (Methanobacterium thermoautotrophicum).